A 225-amino-acid chain; its full sequence is Urease accessory protein UreE (225 aa).

2 stretches are compositionally biased toward basic and acidic residues: residues 189-202 (HSHD…EHEG) and 212-225 (NSHD…HSRR). Residues 189–225 (HSHDFMGHSHEHEGHRHVHNHAGNSHDNEHDEHHSRR) are disordered.

The protein belongs to the UreE family.

The protein localises to the cytoplasm. In terms of biological role, involved in urease metallocenter assembly. Binds nickel. Probably functions as a nickel donor during metallocenter assembly. The polypeptide is Urease accessory protein UreE (Edwardsiella ictaluri).